We begin with the raw amino-acid sequence, 190 residues long: Imidazoleglycerol-phosphate dehydratase (190 aa).

This sequence belongs to the imidazoleglycerol-phosphate dehydratase family.

The protein resides in the cytoplasm. The catalysed reaction is D-erythro-1-(imidazol-4-yl)glycerol 3-phosphate = 3-(imidazol-4-yl)-2-oxopropyl phosphate + H2O. It participates in amino-acid biosynthesis; L-histidine biosynthesis; L-histidine from 5-phospho-alpha-D-ribose 1-diphosphate: step 6/9. In Aliarcobacter butzleri (strain RM4018) (Arcobacter butzleri), this protein is Imidazoleglycerol-phosphate dehydratase.